The primary structure comprises 588 residues: uncharacterized protein (588 aa).

The signal sequence occupies residues 1-19 (MRSTAYLTALLSFLGATHA). Asn-45 and Asn-104 each carry an N-linked (GlcNAc...) asparagine glycan. An FAD-binding PCMH-type domain is found at 118–303 (GQGRIPLYSA…TSVTLRTFKD (186 aa)). At His-156 the chain carries Pros-8alpha-FAD histidine. Asn-179, Asn-312, Asn-320, Asn-351, Asn-370, and Asn-446 each carry an N-linked (GlcNAc...) asparagine glycan.

Belongs to the oxygen-dependent FAD-linked oxidoreductase family. It depends on FAD as a cofactor.

It is found in the secreted. This is an uncharacterized protein from Arthroderma benhamiae (strain ATCC MYA-4681 / CBS 112371) (Trichophyton mentagrophytes).